The primary structure comprises 418 residues: Glutamyl-tRNA reductase (418 aa).

Residues 49–52 (TCNR), Ser-109, 114–116 (EPQ), and Gln-120 each bind substrate. Cys-50 (nucleophile) is an active-site residue. Residue 189-194 (GAGETI) coordinates NADP(+).

The protein belongs to the glutamyl-tRNA reductase family. Homodimer.

It catalyses the reaction (S)-4-amino-5-oxopentanoate + tRNA(Glu) + NADP(+) = L-glutamyl-tRNA(Glu) + NADPH + H(+). It participates in porphyrin-containing compound metabolism; protoporphyrin-IX biosynthesis; 5-aminolevulinate from L-glutamyl-tRNA(Glu): step 1/2. Functionally, catalyzes the NADPH-dependent reduction of glutamyl-tRNA(Glu) to glutamate 1-semialdehyde (GSA). In Citrobacter koseri (strain ATCC BAA-895 / CDC 4225-83 / SGSC4696), this protein is Glutamyl-tRNA reductase.